We begin with the raw amino-acid sequence, 322 residues long: Ferrochelatase (322 aa).

Residues H193 and E274 each coordinate Fe cation.

Belongs to the ferrochelatase family.

The protein resides in the cytoplasm. It carries out the reaction heme b + 2 H(+) = protoporphyrin IX + Fe(2+). It participates in porphyrin-containing compound metabolism; protoheme biosynthesis; protoheme from protoporphyrin-IX: step 1/1. Functionally, catalyzes the ferrous insertion into protoporphyrin IX. This chain is Ferrochelatase, found in Aliivibrio fischeri (strain MJ11) (Vibrio fischeri).